The sequence spans 1412 residues: DNA-directed RNA polymerase subunit beta' (1412 aa).

Zn(2+)-binding residues include Cys-70, Cys-72, Cys-85, and Cys-88. Mg(2+)-binding residues include Asp-460, Asp-462, and Asp-464. 4 residues coordinate Zn(2+): Cys-819, Cys-893, Cys-900, and Cys-903. The interval 1392-1412 is disordered; it reads EEAFEFGTPSAPAEEPQHPAE.

Belongs to the RNA polymerase beta' chain family. The RNAP catalytic core consists of 2 alpha, 1 beta, 1 beta' and 1 omega subunit. When a sigma factor is associated with the core the holoenzyme is formed, which can initiate transcription. Requires Mg(2+) as cofactor. The cofactor is Zn(2+).

It carries out the reaction RNA(n) + a ribonucleoside 5'-triphosphate = RNA(n+1) + diphosphate. Functionally, DNA-dependent RNA polymerase catalyzes the transcription of DNA into RNA using the four ribonucleoside triphosphates as substrates. This chain is DNA-directed RNA polymerase subunit beta', found in Burkholderia mallei (strain NCTC 10247).